The primary structure comprises 492 residues: Lipopolysaccharide biosynthesis protein WzxC (492 aa).

Topologically, residues 1 to 12 are cytoplasmic; sequence MSLREKTISGAK. The chain crosses the membrane as a helical span at residues 13–33; that stretch reads WSAIATVIIIGLGLVQMTVLA. At 34–42 the chain is on the periplasmic side; the sequence is RIIDNHQFG. Residues 43 to 63 form a helical membrane-spanning segment; the sequence is LLTVSLVIIALADTLSDFGIA. Residues 64–81 lie on the Cytoplasmic side of the membrane; it reads NSIIQRKEISHLELTTLY. The chain crosses the membrane as a helical span at residues 82–102; that stretch reads WLNVGLGIVVCVAVFLLSDLI. The Periplasmic segment spans residues 103–104; that stretch reads GD. The chain crosses the membrane as a helical span at residues 105-125; sequence VLNNPDLAPLIKTLSLAFVVI. The Cytoplasmic portion of the chain corresponds to 126 to 157; it reads PHGQQFRALMQKELEFNKIGMIETSAVLAGFT. A helical transmembrane segment spans residues 158–178; sequence CTVVSAHFWPLAMTAILGYLV. Topologically, residues 179-236 are periplasmic; the sequence is NSAVRTLLFGYFGRKIYRPGLHFSLASVAPNLRFGAWLTADSIINYLNTNLSTLVLAR. Residues 237 to 257 form a helical membrane-spanning segment; sequence ILGAGVAGGYNLAYNVAVVPP. The Cytoplasmic portion of the chain corresponds to 258-288; it reads MKLNPIITRVLFPAFAKIQDDTEKLRVNFYK. A helical transmembrane segment spans residues 289–309; the sequence is LLSVVGIINFPALLGLMVVSN. The Periplasmic portion of the chain corresponds to 310-322; it reads NFVPLVFGEKWNS. Residues 323–343 traverse the membrane as a helical segment; it reads IIPVLQLLCVVGLLRSVGNPI. Residues 344-364 lie on the Cytoplasmic side of the membrane; that stretch reads GSLLMAKARVDISFKFNVFKT. The helical transmembrane segment at 365–385 threads the bilayer; sequence FLFIPAIVIGGQMAGAIGVTL. A topological domain (periplasmic) is located at residue G386. A helical transmembrane segment spans residues 387 to 407; it reads FLLVQIINTILSYFVMIKPVL. At 408–417 the chain is on the cytoplasmic side; sequence GSSYRQYILS. Residues 418-438 form a helical membrane-spanning segment; that stretch reads LWLPFYLSLPTLVVSYALGIV. At 439–445 the chain is on the periplasmic side; sequence LKGQLAL. A helical transmembrane segment spans residues 446–466; sequence GMLLAVQIATGVLAFVVMIVL. Topologically, residues 467–492 are cytoplasmic; sequence SRHPLVVEVKRQFCRSEKMKMLLRAG.

The protein belongs to the polysaccharide synthase family.

It localises to the cell inner membrane. It participates in bacterial outer membrane biogenesis; lipopolysaccharide biosynthesis. This is Lipopolysaccharide biosynthesis protein WzxC (wzxC) from Escherichia coli (strain K12).